We begin with the raw amino-acid sequence, 177 residues long: MIISENNRREICKYLFKEGVCFAKKDFNLPKHPLIDVPNLQVIKLMQSFKSKEYVRETFAWMHYYWFLTNEGIEFLRTYLNLPSDVVPATLKKSAKPGGRPFGGPPGDRQRGPPRSDGDRPRFGDRDGYRGGPRGGDEKGGAPADFQPSFQGGGGRPGFGRGAGGYSAAAPSGSGFP.

The interval 90–177 (TLKKSAKPGG…AAAPSGSGFP (88 aa)) is disordered. Residues 108 to 140 (DRQRGPPRSDGDRPRFGDRDGYRGGPRGGDEKG) are compositionally biased toward basic and acidic residues. Positions 141-150 (GAPADFQPSF) are enriched in low complexity. Positions 151 to 165 (QGGGGRPGFGRGAGG) are enriched in gly residues. Positions 166-177 (YSAAAPSGSGFP) are enriched in low complexity.

Belongs to the eukaryotic ribosomal protein eS10 family.

It localises to the cytoplasm. The chain is Small ribosomal subunit protein eS10z (RPS10A) from Arabidopsis thaliana (Mouse-ear cress).